The sequence spans 171 residues: S-ribosylhomocysteine lyase (171 aa).

Residues His54, His58, and Cys128 each coordinate Fe cation.

Belongs to the LuxS family. As to quaternary structure, homodimer. It depends on Fe cation as a cofactor.

It catalyses the reaction S-(5-deoxy-D-ribos-5-yl)-L-homocysteine = (S)-4,5-dihydroxypentane-2,3-dione + L-homocysteine. Its function is as follows. Involved in the synthesis of autoinducer 2 (AI-2) which is secreted by bacteria and is used to communicate both the cell density and the metabolic potential of the environment. The regulation of gene expression in response to changes in cell density is called quorum sensing. Catalyzes the transformation of S-ribosylhomocysteine (RHC) to homocysteine (HC) and 4,5-dihydroxy-2,3-pentadione (DPD). The sequence is that of S-ribosylhomocysteine lyase from Salmonella typhi.